The chain runs to 395 residues: RNA polymerase II elongation factor ELL3 (395 aa).

4 disordered regions span residues 124–149 (SSLQRHNRTEDARDRESWQNVGDYPE), 163–182 (VPDPLASSQGQSLPGSSREH), 194–218 (LPNRDPDQALPPSASQKHVDKKRPA), and 233–279 (LAPS…SLSP). The segment covering 130-140 (NRTEDARDRES) has biased composition (basic and acidic residues). Residues 168-177 (ASSQGQSLPG) are compositionally biased toward polar residues. Positions 246 to 258 (LQEEDWEQEDKDE) are enriched in acidic residues. Positions 268 to 277 (PSVQADSESL) are enriched in polar residues. The OCEL domain maps to 283 to 393 (PDYLLQYRAI…LILEFEEKNR (111 aa)).

The protein belongs to the ELL/occludin family. In terms of assembly, interacts with AFF4. Component of the super elongation complex (SEC), at least composed of EAF1, EAF2, CDK9, MLLT3/AF9, AFF (AFF1 or AFF4), the P-TEFb complex and ELL (ELL, ELL2 or ELL3). Component of the little elongation complex (LEC), at least composed of ELL (ELL, ELL2 or ELL3), ZC3H8, ICE1 and ICE2.

Its subcellular location is the nucleus. In terms of biological role, enhancer-binding elongation factor that specifically binds enhancers in embryonic stem cells (ES cells), marks them, and is required for their future activation during stem cell specification. Elongation factor component of the super elongation complex (SEC), a complex required to increase the catalytic rate of RNA polymerase II transcription by suppressing transient pausing by the polymerase at multiple sites along the DNA. Component of the little elongation complex (LEC), a complex required to regulate small nuclear RNA (snRNA) gene transcription by RNA polymerase II and III. Does not only bind to enhancer regions of active genes, but also marks the enhancers that are in a poised or inactive state in ES cells and is required for establishing proper RNA polymerase II occupancy at developmentally regulated genes in a cohesin-dependent manner. Probably required for priming developmentally regulated genes for later recruitment of the super elongation complex (SEC), for transcriptional activation during differentiation. Required for recruitment of P-TEFb within SEC during differentiation. Probably preloaded on germ cell chromatin, suggesting that it may prime gene activation by marking enhancers as early as in the germ cells. Promoting epithelial-mesenchymal transition (EMT). The chain is RNA polymerase II elongation factor ELL3 (ELL3) from Bos taurus (Bovine).